The sequence spans 112 residues: Putative pterin-4-alpha-carbinolamine dehydratase (112 aa).

It belongs to the pterin-4-alpha-carbinolamine dehydratase family.

The catalysed reaction is (4aS,6R)-4a-hydroxy-L-erythro-5,6,7,8-tetrahydrobiopterin = (6R)-L-erythro-6,7-dihydrobiopterin + H2O. This Vibrio campbellii (strain ATCC BAA-1116) protein is Putative pterin-4-alpha-carbinolamine dehydratase.